The following is a 142-amino-acid chain: Deoxyuridine 5'-triphosphate nucleotidohydrolase (142 aa).

Substrate contacts are provided by residues 62-64 (RSG), asparagine 75, and 79-81 (TID).

It belongs to the dUTPase family. It depends on Mg(2+) as a cofactor.

It carries out the reaction dUTP + H2O = dUMP + diphosphate + H(+). It participates in pyrimidine metabolism; dUMP biosynthesis; dUMP from dCTP (dUTP route): step 2/2. Functionally, this enzyme is involved in nucleotide metabolism: it produces dUMP, the immediate precursor of thymidine nucleotides and it decreases the intracellular concentration of dUTP so that uracil cannot be incorporated into DNA. In Picosynechococcus sp. (strain ATCC 27264 / PCC 7002 / PR-6) (Agmenellum quadruplicatum), this protein is Deoxyuridine 5'-triphosphate nucleotidohydrolase.